Here is a 218-residue protein sequence, read N- to C-terminus: ATP-dependent dethiobiotin synthetase BioD (218 aa).

An ATP-binding site is contributed by 9–15 (TNAGKTT). Residue T14 participates in Mg(2+) binding. K35 is a catalytic residue. K35 is a phosphate binding site. T39 provides a ligand contact to substrate. ATP contacts are provided by residues D50, E116, and 116 to 119 (EGAG). Residues D50 and E116 each coordinate Mg(2+). 116–119 (EGAG) provides a ligand contact to phosphate. 151–154 (GLIN) lines the substrate pocket. Residues N175 and 175-177 (NLK) contribute to the ATP site.

Belongs to the dethiobiotin synthetase family. As to quaternary structure, homodimer. Mg(2+) serves as cofactor.

The protein localises to the cytoplasm. The catalysed reaction is (7R,8S)-7,8-diammoniononanoate + CO2 + ATP = (4R,5S)-dethiobiotin + ADP + phosphate + 3 H(+). The protein operates within cofactor biosynthesis; biotin biosynthesis; biotin from 7,8-diaminononanoate: step 1/2. Catalyzes a mechanistically unusual reaction, the ATP-dependent insertion of CO2 between the N7 and N8 nitrogen atoms of 7,8-diaminopelargonic acid (DAPA, also called 7,8-diammoniononanoate) to form a ureido ring. The chain is ATP-dependent dethiobiotin synthetase BioD from Helicobacter pylori (strain ATCC 700392 / 26695) (Campylobacter pylori).